A 419-amino-acid chain; its full sequence is UDP-N-acetylglucosamine 1-carboxyvinyltransferase (419 aa).

Lys-22–Asn-23 serves as a coordination point for phosphoenolpyruvate. Arg-95 lines the UDP-N-acetyl-alpha-D-glucosamine pocket. Cys-119 acts as the Proton donor in catalysis. Position 119 is a 2-(S-cysteinyl)pyruvic acid O-phosphothioketal (Cys-119). UDP-N-acetyl-alpha-D-glucosamine contacts are provided by residues Lys-164 to Val-167, Asp-308, and Ile-330.

The protein belongs to the EPSP synthase family. MurA subfamily.

It localises to the cytoplasm. It catalyses the reaction phosphoenolpyruvate + UDP-N-acetyl-alpha-D-glucosamine = UDP-N-acetyl-3-O-(1-carboxyvinyl)-alpha-D-glucosamine + phosphate. Its pathway is cell wall biogenesis; peptidoglycan biosynthesis. In terms of biological role, cell wall formation. Adds enolpyruvyl to UDP-N-acetylglucosamine. This is UDP-N-acetylglucosamine 1-carboxyvinyltransferase from Rickettsia conorii (strain ATCC VR-613 / Malish 7).